We begin with the raw amino-acid sequence, 176 residues long: dCTP deaminase (176 aa).

DCTP is bound by residues 102-107 (RSTFAR) and aspartate 118. Glutamate 128 serves as the catalytic Proton donor/acceptor. DCTP is bound by residues tyrosine 160 and glutamine 167.

This sequence belongs to the dCTP deaminase family. As to quaternary structure, homotrimer.

It catalyses the reaction dCTP + H2O + H(+) = dUTP + NH4(+). Its pathway is pyrimidine metabolism; dUMP biosynthesis; dUMP from dCTP (dUTP route): step 1/2. Its function is as follows. Catalyzes the deamination of dCTP to dUTP. The protein is dCTP deaminase of Hyperthermus butylicus (strain DSM 5456 / JCM 9403 / PLM1-5).